The chain runs to 445 residues: Phosphoglucosamine mutase (445 aa).

The active-site Phosphoserine intermediate is the Ser-102. Residues Ser-102, Asp-241, Asp-243, and Asp-245 each contribute to the Mg(2+) site. Residue Ser-102 is modified to Phosphoserine.

It belongs to the phosphohexose mutase family. It depends on Mg(2+) as a cofactor. In terms of processing, activated by phosphorylation.

It carries out the reaction alpha-D-glucosamine 1-phosphate = D-glucosamine 6-phosphate. Its function is as follows. Catalyzes the conversion of glucosamine-6-phosphate to glucosamine-1-phosphate. In Aliivibrio salmonicida (strain LFI1238) (Vibrio salmonicida (strain LFI1238)), this protein is Phosphoglucosamine mutase.